The following is a 612-amino-acid chain: T-cell immunomodulatory protein (612 aa).

The N-terminal stretch at 1-33 (MAAAGRLPSSWALFSPLLAGLALLGVGPVPARA) is a signal peptide. Asparagine 36, asparagine 95, asparagine 139, asparagine 146, asparagine 151, asparagine 176, asparagine 188, asparagine 226, and asparagine 243 each carry an N-linked (GlcNAc...) asparagine glycan. Residues 258 to 293 (VVGQSAFADFDGDGHMDHLLPGCEDKNCQKSTIYLV) form an FG-GAP; atypical repeat. Asparagine 353, asparagine 371, and asparagine 482 each carry an N-linked (GlcNAc...) asparagine glycan. Residues 567-587 (VLLTAIALIGVCVFILAIIGI) form a helical membrane-spanning segment.

Belongs to the TIP family. In terms of assembly, interacts with RUVBL1, RUVBL2 and alpha-tubulin. Ubiquitously expressed.

It localises to the secreted. The protein localises to the membrane. Its function is as follows. Modulator of T-cell function. Has a protective effect in graft versus host disease model. This is T-cell immunomodulatory protein from Homo sapiens (Human).